Here is a 208-residue protein sequence, read N- to C-terminus: Uracil phosphoribosyltransferase (208 aa).

5-phospho-alpha-D-ribose 1-diphosphate-binding positions include arginine 78, arginine 103, and 130–138; that span reads DPMLATGGS. Uracil-binding positions include isoleucine 193 and 198 to 200; that span reads GDA. Residue aspartate 199 participates in 5-phospho-alpha-D-ribose 1-diphosphate binding.

This sequence belongs to the UPRTase family. Requires Mg(2+) as cofactor.

The enzyme catalyses UMP + diphosphate = 5-phospho-alpha-D-ribose 1-diphosphate + uracil. The protein operates within pyrimidine metabolism; UMP biosynthesis via salvage pathway; UMP from uracil: step 1/1. Its activity is regulated as follows. Allosterically activated by GTP. Functionally, catalyzes the conversion of uracil and 5-phospho-alpha-D-ribose 1-diphosphate (PRPP) to UMP and diphosphate. The sequence is that of Uracil phosphoribosyltransferase from Klebsiella pneumoniae (strain 342).